The chain runs to 363 residues: MSVMVVRKKVTRKWEKLPGRNTFCCDGRVMMARQKGIFYLTLFLILGTCTLFFAFECRYLAVQLSPAIPVFAAMLFLFSMATLLRTSFSDPGVIPRALPDEAAFIEMEIEATNGAVPQGQRPPPRIKNFQINNQIVKLKYCYTCKIFRPPRASHCSICDNCVERFDHHCPWVGNCVGKRNYRYFYLFILSLSLLTIYVFAFNIVYVALKSLKIGFLETLKETPGTVLEVLICFFTLWSVVGLTGFHTFLVALNQTTNEDIKGSWTGKNRVQNPYSHGNIVKNCCEVLCGPLPPSVLDRRGILPLEESGSRPPSTQEASTSLLPQGPAPIDHLSNEMPEDTSTPEEMPPPEPPEPPQEVTEAEK.

Topologically, residues 1-35 are cytoplasmic; sequence MSVMVVRKKVTRKWEKLPGRNTFCCDGRVMMARQK. The helical transmembrane segment at 36-56 threads the bilayer; it reads GIFYLTLFLILGTCTLFFAFE. The Lumenal portion of the chain corresponds to 57-63; that stretch reads CRYLAVQ. Residues 64 to 84 traverse the membrane as a helical segment; the sequence is LSPAIPVFAAMLFLFSMATLL. Topologically, residues 85–183 are cytoplasmic; it reads RTSFSDPGVI…NCVGKRNYRY (99 aa). A DHHC domain is found at 139-189; that stretch reads KYCYTCKIFRPPRASHCSICDNCVERFDHHCPWVGNCVGKRNYRYFYLFIL. The S-palmitoyl cysteine intermediate role is filled by C169. Residues 184 to 204 traverse the membrane as a helical segment; it reads FYLFILSLSLLTIYVFAFNIV. The Lumenal segment spans residues 205 to 228; the sequence is YVALKSLKIGFLETLKETPGTVLE. Residues 229–249 traverse the membrane as a helical segment; the sequence is VLICFFTLWSVVGLTGFHTFL. Residues 250 to 363 are Cytoplasmic-facing; the sequence is VALNQTTNED…PPQEVTEAEK (114 aa). The segment at 303–363 is disordered; that stretch reads PLEESGSRPP…PPQEVTEAEK (61 aa). Residues 310–322 show a composition bias toward polar residues; it reads RPPSTQEASTSLL. The span at 345–355 shows a compositional bias: pro residues; that stretch reads EMPPPEPPEPP.

This sequence belongs to the DHHC palmitoyltransferase family. ERF2/ZDHHC9 subfamily. In terms of assembly, interacts with GOLGA7.

Its subcellular location is the endoplasmic reticulum membrane. It is found in the golgi apparatus membrane. It catalyses the reaction L-cysteinyl-[protein] + hexadecanoyl-CoA = S-hexadecanoyl-L-cysteinyl-[protein] + CoA. Functionally, palmitoyltransferase that catalyzes the addition of palmitate onto various protein substrates, such as ADRB2, GSDMD, HRAS, NRAS and CGAS. The ZDHHC9-GOLGA7 complex is a palmitoyltransferase specific for HRAS and NRAS. May have a palmitoyltransferase activity toward the beta-2 adrenergic receptor/ADRB2 and therefore regulate G protein-coupled receptor signaling. Acts as a regulator of innate immunity by catalyzing palmitoylation of CGAS, thereby promoting CGAS homodimerization and cyclic GMP-AMP synthase activity. Activates pyroptosis by catalyzing palmitoylation of gasdermin-D (GSDMD), thereby promoting membrane translocation and pore formation of GSDMD. The polypeptide is Palmitoyltransferase ZDHHC9 (ZDHHC9) (Bos taurus (Bovine)).